A 116-amino-acid chain; its full sequence is uncharacterized protein (116 aa).

A helical transmembrane segment spans residues 22–42 (LIFLVVNLKVPAVGLELFLLV).

The protein resides in the membrane. This is an uncharacterized protein from Saccharomyces cerevisiae (strain ATCC 204508 / S288c) (Baker's yeast).